The following is an 85-amino-acid chain: uncharacterized protein (85 aa).

The protein belongs to the BolA/IbaG family.

This is an uncharacterized protein from Haemophilus influenzae (strain ATCC 51907 / DSM 11121 / KW20 / Rd).